The following is a 387-amino-acid chain: MHRGRSASARQERDFRALMDLAHGFMASQVLFAGCALRVFDAAALGPVDAAALARSSGLSPRGTRLLLDACAGLGLLRRRRGAGPRGPAYTNSPLASTFLVAGSPLSQRSLLLYLAGTTYLCWGHLADGVREGRSQYARAVGVDADDPFTAIYRSEAERLLFMRGLQETWSLCGGRVLTAFDLSPFRVICDLGGGSGALARMAARLYPGSEVTVFETPDVVAAARAHFPPPADEDGAEPRVRFLSGDFFRSPLPPADLYVLARVLHDWADAACVELLRRVRGALRPGGAVLLVESVLSPGGAGPTRTLLLSLTMLLQARGRERTEAEYRALTARAGFSRLRLRRPRGPYHAMMAARGGGAGARSDGGGGDATSQTGSGTGSEVGAQD.

Residues Tyr-153, Trp-170, Glu-216, 246–248, and Arg-263 each bind S-adenosyl-L-methionine; that span reads GDF. His-266 acts as the Proton donor/acceptor in catalysis. Substrate-binding residues include Asp-267 and Gln-317. A disordered region spans residues 354–387; the sequence is AARGGGAGARSDGGGGDATSQTGSGTGSEVGAQD. The segment covering 356 to 370 has biased composition (gly residues); that stretch reads RGGGAGARSDGGGGD.

The protein belongs to the class I-like SAM-binding methyltransferase superfamily. Cation-independent O-methyltransferase family. Homodimer. In terms of tissue distribution, expressed predominantly in the pineal gland (at protein level). Very low expression, if any, in the retina.

It catalyses the reaction N-acetylserotonin + S-adenosyl-L-methionine = melatonin + S-adenosyl-L-homocysteine + H(+). The protein operates within aromatic compound metabolism; melatonin biosynthesis; melatonin from serotonin: step 1/2. Functionally, catalyzes the transfer of a methyl group onto N-acetylserotonin, producing melatonin (N-acetyl-5-methoxytryptamine). The sequence is that of Acetylserotonin O-methyltransferase (Asmt) from Mus musculus (Mouse).